A 448-amino-acid polypeptide reads, in one-letter code: Probable glycine dehydrogenase (decarboxylating) subunit 1 (448 aa).

This sequence belongs to the GcvP family. N-terminal subunit subfamily. As to quaternary structure, the glycine cleavage system is composed of four proteins: P, T, L and H. In this organism, the P 'protein' is a heterodimer of two subunits.

The enzyme catalyses N(6)-[(R)-lipoyl]-L-lysyl-[glycine-cleavage complex H protein] + glycine + H(+) = N(6)-[(R)-S(8)-aminomethyldihydrolipoyl]-L-lysyl-[glycine-cleavage complex H protein] + CO2. The glycine cleavage system catalyzes the degradation of glycine. The P protein binds the alpha-amino group of glycine through its pyridoxal phosphate cofactor; CO(2) is released and the remaining methylamine moiety is then transferred to the lipoamide cofactor of the H protein. This Geobacillus sp. (strain WCH70) protein is Probable glycine dehydrogenase (decarboxylating) subunit 1.